We begin with the raw amino-acid sequence, 348 residues long: Rhodopsin (348 aa).

The Extracellular segment spans residues 1–33 (TEGPYFYVPMVNTTGIVRSPYEYPQYYLVNPAA). Asn-12 carries an N-linked (GlcNAc...) asparagine glycan. A helical transmembrane segment spans residues 34–58 (YAVLGAYMFFLIILGFPINFLTLYV). Over 59-70 (TLEHKKLRTPLN) the chain is Cytoplasmic. The chain crosses the membrane as a helical span at residues 71–93 (YILLNLAVADLFMVIGGFTTTMY). Topologically, residues 94-107 (SSMHGYFVLGRLGC) are extracellular. Cysteines 107 and 184 form a disulfide. A helical transmembrane segment spans residues 108–130 (NLEGFSATLGGMISLWSLAVLAI). The short motif at 131–133 (ERW) is the 'Ionic lock' involved in activated form stabilization element. Residues 131–149 (ERWVVVCKPISNFRFGENH) lie on the Cytoplasmic side of the membrane. Residues 150–170 (AIMGVSLTWTMALACTVPPLV) traverse the membrane as a helical segment. Residues 171 to 199 (GWSRYIPEGMQCSCGIDYYTRAEGFNNES) are Extracellular-facing. N-linked (GlcNAc...) asparagine glycosylation occurs at Asn-197. Residues 200–221 (FVLYMFFCHFMVPLIIIFFCYG) traverse the membrane as a helical segment. The Cytoplasmic portion of the chain corresponds to 222 to 249 (RLLCAVKEAAAAQQESETTQRAEREVTR). A helical transmembrane segment spans residues 250-271 (MVILMVIGYLVCWLPYASVAWF). The Extracellular segment spans residues 272 to 283 (IFTHQGSEFGPL). The helical transmembrane segment at 284 to 305 (FMTIPAFFAKSSSIYNPVIYIC) threads the bilayer. Residue Lys-293 is modified to N6-(retinylidene)lysine. Topologically, residues 306–348 (MNKQFRNCMITTLFCGKNPFEGEEEGASSTKTEASSASSVSPA) are cytoplasmic. Cys-320 is lipidated: S-palmitoyl cysteine. Positions 327 to 348 (GEEEGASSTKTEASSASSVSPA) are disordered. Residues 332 to 348 (ASSTKTEASSASSVSPA) show a composition bias toward low complexity.

This sequence belongs to the G-protein coupled receptor 1 family. Opsin subfamily. Phosphorylated on some or all of the serine and threonine residues present in the C-terminal region. In terms of processing, contains one covalently linked retinal chromophore.

The protein localises to the membrane. Its subcellular location is the cell projection. The protein resides in the cilium. It localises to the photoreceptor outer segment. In terms of biological role, photoreceptor required for image-forming vision at low light intensity. While most salt water fish species use retinal as chromophore, most freshwater fish use 3-dehydroretinal, or a mixture of retinal and 3-dehydroretinal. Light-induced isomerization of 11-cis to all-trans retinal triggers a conformational change that activates signaling via G-proteins. Subsequent receptor phosphorylation mediates displacement of the bound G-protein alpha subunit by arrestin and terminates signaling. This is Rhodopsin (rho) from Neoniphon argenteus (Clearfin squirrelfish).